The chain runs to 313 residues: tRNA-cytidine(32) 2-sulfurtransferase (313 aa).

The short motif at 54–59 (SGGKDS) is the PP-loop motif element. Residues Cys129, Cys132, and Cys220 each coordinate [4Fe-4S] cluster.

It belongs to the TtcA family. Homodimer. It depends on Mg(2+) as a cofactor. Requires [4Fe-4S] cluster as cofactor.

It is found in the cytoplasm. It catalyses the reaction cytidine(32) in tRNA + S-sulfanyl-L-cysteinyl-[cysteine desulfurase] + AH2 + ATP = 2-thiocytidine(32) in tRNA + L-cysteinyl-[cysteine desulfurase] + A + AMP + diphosphate + H(+). It functions in the pathway tRNA modification. In terms of biological role, catalyzes the ATP-dependent 2-thiolation of cytidine in position 32 of tRNA, to form 2-thiocytidine (s(2)C32). The sulfur atoms are provided by the cysteine/cysteine desulfurase (IscS) system. This Methylibium petroleiphilum (strain ATCC BAA-1232 / LMG 22953 / PM1) protein is tRNA-cytidine(32) 2-sulfurtransferase.